The primary structure comprises 371 residues: Leucine-rich repeat-containing protein 58 (371 aa).

Position 24 is a phosphoserine (serine 24). LRR repeat units follow at residues 45–66, 69–91, 92–113, 121–143, 144–166, 167–189, 190–211, 213–234, and 236–256; these read ALLRLLLPHNRLVSLPRALGSG, HLQLLDVSGNALTALGPELLALR, GLRTLLAKNNRLGGPSALPKGL, SLQVLNLSGNCFQEVPASLLELR, ALQTLSLGGNQLQSIPAEIENLQ, SLECLYLGGNFIKEIPPELGNLP, SLNYLVLCDNKIQSIPPQLSQL, SLRSLSLHNNLLTYLPREILNL, and HLEELSLRGNPLVVRFVRDLT. A compositionally biased stretch (low complexity) spans 340 to 351; the sequence is SSASHSSTSQSE. The interval 340 to 361 is disordered; it reads SSASHSSTSQSESDSEDEASVA.

In Homo sapiens (Human), this protein is Leucine-rich repeat-containing protein 58 (LRRC58).